The chain runs to 317 residues: 2,3,4,5-tetrahydropyridine-2,6-dicarboxylate N-succinyltransferase (317 aa).

Residues Asp-166 and Glu-183 each coordinate Mg(2+). Residue Glu-199 is the Acyl-anhydride intermediate of the active site. Succinyl-CoA is bound by residues Arg-201, Gly-216, Ser-219, Ala-242, 257 to 258, Gly-265, Lys-277, and 290 to 293; these read EA and RRNS.

Belongs to the type 2 tetrahydrodipicolinate N-succinyltransferase family. In terms of assembly, homotrimer.

Its subcellular location is the cytoplasm. It carries out the reaction (S)-2,3,4,5-tetrahydrodipicolinate + succinyl-CoA + H2O = (S)-2-succinylamino-6-oxoheptanedioate + CoA. Its pathway is amino-acid biosynthesis; L-lysine biosynthesis via DAP pathway; LL-2,6-diaminopimelate from (S)-tetrahydrodipicolinate (succinylase route): step 1/3. Functionally, catalyzes the conversion of the cyclic tetrahydrodipicolinate (THDP) into the acyclic N-succinyl-L-2-amino-6-oxopimelate using succinyl-CoA. The chain is 2,3,4,5-tetrahydropyridine-2,6-dicarboxylate N-succinyltransferase (dapD) from Mycobacterium tuberculosis (strain CDC 1551 / Oshkosh).